Here is a 309-residue protein sequence, read N- to C-terminus: MIYLAEGCFWGVEEYFSQVDGVLDAVSGYANGRGDTTNYQLIHQTGHAETVEVTYDANRISLKELLLHFFRIIDPTSLNKQGNDRGSQYRTGIYYTDKADLAIIDEVFKEKAKDYKKKIVVEKAPLKHFIKAEEYHQDYLKKNPNGYCHIDINQATYPVIDESKYPKPSATEIKAKLSADEYRVTQKNETEKAFSNRYWDSFDAGIYVDVVTGEPLFSSKDKFESGCGWPSFSRPISPDVVRYKEDKSFNMTRTEVRSRSGNSHLGHVFTDGPKDQGGLRYCINSLSITFIPKADMEAKGYGYLLSSVE.

Residues M1 to N153 are peptide methionine sulfoxide reductase A. C8 is a catalytic residue. The MsrB domain occupies A170–K293. The Nucleophile role is filled by C282.

It in the N-terminal section; belongs to the MsrA Met sulfoxide reductase family. The protein in the C-terminal section; belongs to the MsrB Met sulfoxide reductase family.

The catalysed reaction is L-methionyl-[protein] + [thioredoxin]-disulfide + H2O = L-methionyl-(S)-S-oxide-[protein] + [thioredoxin]-dithiol. The enzyme catalyses [thioredoxin]-disulfide + L-methionine + H2O = L-methionine (S)-S-oxide + [thioredoxin]-dithiol. It carries out the reaction L-methionyl-[protein] + [thioredoxin]-disulfide + H2O = L-methionyl-(R)-S-oxide-[protein] + [thioredoxin]-dithiol. Its function is as follows. Has an important function as a repair enzyme for proteins that have been inactivated by oxidation. Catalyzes the reversible oxidation-reduction of methionine sulfoxide in proteins to methionine. This chain is Peptide methionine sulfoxide reductase MsrA/MsrB (msrAB), found in Streptococcus pyogenes serotype M3 (strain ATCC BAA-595 / MGAS315).